Consider the following 341-residue polypeptide: UDP-3-O-acylglucosamine N-acyltransferase (341 aa).

Catalysis depends on His255, which acts as the Proton acceptor.

This sequence belongs to the transferase hexapeptide repeat family. LpxD subfamily. In terms of assembly, homotrimer.

The catalysed reaction is a UDP-3-O-[(3R)-3-hydroxyacyl]-alpha-D-glucosamine + a (3R)-hydroxyacyl-[ACP] = a UDP-2-N,3-O-bis[(3R)-3-hydroxyacyl]-alpha-D-glucosamine + holo-[ACP] + H(+). It participates in bacterial outer membrane biogenesis; LPS lipid A biosynthesis. Functionally, catalyzes the N-acylation of UDP-3-O-acylglucosamine using 3-hydroxyacyl-ACP as the acyl donor. Is involved in the biosynthesis of lipid A, a phosphorylated glycolipid that anchors the lipopolysaccharide to the outer membrane of the cell. In Granulibacter bethesdensis (strain ATCC BAA-1260 / CGDNIH1), this protein is UDP-3-O-acylglucosamine N-acyltransferase.